The chain runs to 646 residues: Rho guanine nucleotide exchange factor 7 (646 aa).

Residues 6-65 enclose the SH3 domain; it reads NSQLVVRAKFNFQQTNEDELSFSKGDVIHVTRVEEGGWWEGTHNGRTGWFPSNYVREIKP. Residues serine 7, serine 71, and serine 79 each carry the phosphoserine modification. A DH domain is found at 93-273; that stretch reads YYNVVLQNIL…KNLSAQCQEV (181 aa). The PH domain occupies 295 to 400; that stretch reads DIKTLGSVTY…WVEHLQRQTK (106 aa). At serine 340 the chain carries Phosphoserine. Disordered stretches follow at residues 402 to 464 and 500 to 520; these read TSVS…GPLE and KTMKKLLPKRKPERKPSDEEF. Positions 415–428 are enriched in polar residues; sequence PSHTLPSHPLTPSS. Residues 500–512 show a composition bias toward basic residues; the sequence is KTMKKLLPKRKPE. Residues serine 516 and serine 560 each carry the phosphoserine modification.

In terms of assembly, interacts with SCRIB; interaction is direct and may play a role in regulation of apoptosis. Interacts with PAK kinases through the SH3 domain. Interacts with GIT1 and probably TGFB1I1. Interacts with ITCH and PARVB. Interacts with FRMPD4 (via N-terminus). Interacts with CaMK1. Interacts with PTK2/FAK1 and RAC1. Interacts with BIN2. Interacts with YWHAZ. Interacts (via PH domain) with NOX1 (via FAD-binding FR-type domain). Phosphorylated on Ser-516 by CaMK1; enhancement of GEF activity and downstream activation of RAC1. Phosphorylated by PTK2/FAK1; this promotes interaction with RAC1.

Its subcellular location is the cell junction. It is found in the focal adhesion. The protein localises to the cell projection. The protein resides in the ruffle. It localises to the cytoplasm. Its subcellular location is the cell cortex. It is found in the lamellipodium. In terms of biological role, acts as a RAC1 guanine nucleotide exchange factor (GEF) and can induce membrane ruffling. Functions in cell migration, attachment and cell spreading. Promotes targeting of RAC1 to focal adhesions. May function as a positive regulator of apoptosis. Downstream of NMDA receptors and CaMKK-CaMK1 signaling cascade, promotes the formation of spines and synapses in hippocampal neurons. The sequence is that of Rho guanine nucleotide exchange factor 7 (Arhgef7) from Rattus norvegicus (Rat).